Reading from the N-terminus, the 930-residue chain is MTKIDLINLLDHAADTVAASGILIYSPGNVESPHRLTYAELRDAAQQNARRLGCMEGFAPGSLVLLHLDGYRDNMIWLWSLIYAGCIPVMSTPFAHHEEHRRSHLLHLQSLLRDPICLTRQGLEAQFPPDVGFRLCNIESISGGSNPFTSPRLGQPPGQDDNVDDIALLMLTSGSTGHAKAVPLTHSQLLSALAGKERFLQLRQHGPSLNWVAFDHIASLAEMHFHPIFACIDQVHVAAADVITDPLILLELIHRHRVGITFAPNFLLAKLLDSLEREPSPSSRPWDLSCLMHLLSGGEANVVDTCARLARRLTQDYGVPSTCIKPAFGMTETCAGCSFNDRFPTYETVHMLDFASLGRGVKGVQMRVTSLSTGQPVDDHSEVGNLELSGPSVFRGYYNNSQATRDSFTPDGWFRTGDLAMIDAGGQLVLRGRSKELICINGAKYLPHEVESAIEDAKVRGVTPGFTICFGYRPAKAQTESLAVVYLPAYEEADVESRSQAQNAIIRVGLIMTGTRPYVLPLDAHTLVKSSLGKISRNKIKTGLESGAFQAFEETNNRLLKLRQSTPVVPAGNETETLLLAAALHVFRVTADEFGVETPMFAFGITSLDMIAWKRQAETILGHEIPMLAIITSPTIRVLARQLQDGHHGPGEYNPVVTLQPHGSKTPLWLIHPIGGEVLVFVSLAGLFADDRPVHALRARGLNRGEPPFGSIHEAADAYYQAIKRVQPHGPYAVAGYSYGSLVAFEVAKRLDQHGKDEVPFFGSLDLPPFHAQIISKSDWTESLLHLASSLSLIAEEEINTLGADLRGLPQPRAIQKILARAPPRRIRELDLSPDGLMRWTKLTSAMAQATRGYVPVGQTRSVDVFYTEPSGALATTRDEWLDRHREWRQFGRLETQFHPLEGLHYRLMDEDNVHKVYRVLSRAMDARGL.

An adenylation (A) domain region spans residues 31 to 440 (ESPHRLTYAE…RGRSKELICI (410 aa)). Positions 570-647 (PAGNETETLL…VLARQLQDGH (78 aa)) constitute a Carrier domain. An O-(pantetheine 4'-phosphoryl)serine modification is found at serine 607. Residues 667–920 (PLWLIHPIGG…EDNVHKVYRV (254 aa)) are thioesterase (TE) domain.

It belongs to the NRP synthetase family.

It carries out the reaction 2 3-(4-hydroxyphenyl)pyruvate + H(+) = (2S)-2-(4-hydoxybenzyl)-3-(4-hydroxyphenyl)-2-furonol carboxylate + H2O. It participates in secondary metabolite biosynthesis. Nonribosomal peptide synthetase; part of the gene cluster that mediates the biosynthesis of butyrolactones, natural products that show a wide range of biological activities such as antitumor, antiparasitic or anti-inflammatory activity. The nonribosomal peptide synthetase btyA is responsible for the production of butyrolactone II, the core structure of butyrolactones. BtyA first activates 4-hydroxyphenylpyruvate (HPPA) through its A domain to AMP-HPPA. The HPPA unit is then loaded to the T domain and eventually transferred to the TE domain. Upon loading of another HPPA unit to the T domain, the TE domain promotes the enolate formation on the unit attached. Then aldol condensation establishes the carbon-carbon bond between the two units, followed by ester cyclization, and keto-enol tautomerization to yield the gamma-butyrolactone core. Hydrolysis, and finally esterification of the exposed carboxylic acid group yields butyrolactone II. Two additional enzymes, a prenyltransferase and an epoxidase, may be involved in the tailoring modifications of butyrolactone II to give butyrolactone III and butyrolactone I. This Aspergillus terreus (strain NIH 2624 / FGSC A1156) protein is Nonribosomal peptide synthetase btyA.